The chain runs to 504 residues: L-carnitine/gamma-butyrobetaine antiporter (504 aa).

The next 12 helical transmembrane spans lie at 10-30 (IEPK…WLTV), 51-71 (WGWA…WLVF), 92-112 (IFMM…SIEI), 143-163 (GPLP…FFFV), 195-215 (FYLV…TPLV), 231-251 (LDAI…ACGL), 263-283 (SYLS…SFIM), 316-336 (WTVF…IFLA), 347-367 (LCFG…TVLG), 398-418 (WAAL…CFIA), 446-466 (LLVR…LLAL), and 475-495 (AIIA…LSFI).

It belongs to the BCCT transporter (TC 2.A.15) family. CaiT subfamily. Homotrimer.

It is found in the cell inner membrane. It catalyses the reaction 4-(trimethylamino)butanoate(in) + (R)-carnitine(out) = 4-(trimethylamino)butanoate(out) + (R)-carnitine(in). It participates in amine and polyamine metabolism; carnitine metabolism. Catalyzes the exchange of L-carnitine for gamma-butyrobetaine. The protein is L-carnitine/gamma-butyrobetaine antiporter of Escherichia coli O157:H7.